The sequence spans 353 residues: Phosphoribosylformylglycinamidine cyclo-ligase (353 aa).

Belongs to the AIR synthase family.

The protein resides in the cytoplasm. It carries out the reaction 2-formamido-N(1)-(5-O-phospho-beta-D-ribosyl)acetamidine + ATP = 5-amino-1-(5-phospho-beta-D-ribosyl)imidazole + ADP + phosphate + H(+). The protein operates within purine metabolism; IMP biosynthesis via de novo pathway; 5-amino-1-(5-phospho-D-ribosyl)imidazole from N(2)-formyl-N(1)-(5-phospho-D-ribosyl)glycinamide: step 2/2. The sequence is that of Phosphoribosylformylglycinamidine cyclo-ligase from Pseudomonas aeruginosa (strain LESB58).